Reading from the N-terminus, the 357-residue chain is Probable RNA methyltransferase Daro_1157 (357 aa).

Residue Glu91 is the Proton acceptor of the active site. The 227-residue stretch at 94 to 320 folds into the Radical SAM core domain; the sequence is LLPRDGLCIS…TTVRNSAGQD (227 aa). Cys101 and Cys325 are joined by a disulfide. Residues Cys108, Cys112, and Cys115 each contribute to the [4Fe-4S] cluster site. Residues 153-154, Ser183, 206-208, and Asn282 each bind S-adenosyl-L-methionine; these read GE and SLH. The active-site S-methylcysteine intermediate is Cys325.

Belongs to the radical SAM superfamily. RlmN family. [4Fe-4S] cluster is required as a cofactor.

Its subcellular location is the cytoplasm. This is Probable RNA methyltransferase Daro_1157 from Dechloromonas aromatica (strain RCB).